We begin with the raw amino-acid sequence, 530 residues long: Na(+)/H(+) antiporter NhaB (530 aa).

12 consecutive transmembrane segments (helical) span residues 13–33 (FLGK…VINP), 34–54 (LVFF…EFIF), 90–110 (LVAN…IYFM), 121–141 (ILIG…TAAF), 145–165 (FLDA…FYAI), 205–225 (LLIH…VGEP), 241–261 (FIIR…LTCI), 306–326 (GLIA…VGLI), 327–347 (GLSV…HSMG), 351–371 (EEAL…AVII), 455–475 (GQAA…QLSY), and 481–501 (MALP…IFFL).

It belongs to the NhaB Na(+)/H(+) (TC 2.A.34) antiporter family.

It localises to the cell inner membrane. The enzyme catalyses 2 Na(+)(in) + 3 H(+)(out) = 2 Na(+)(out) + 3 H(+)(in). Na(+)/H(+) antiporter that extrudes sodium in exchange for external protons. The polypeptide is Na(+)/H(+) antiporter NhaB (Aliivibrio fischeri (strain MJ11) (Vibrio fischeri)).